The following is a 342-amino-acid chain: Phosphate acyltransferase (342 aa).

The protein belongs to the PlsX family. In terms of assembly, homodimer. Probably interacts with PlsY.

It is found in the cytoplasm. It catalyses the reaction a fatty acyl-[ACP] + phosphate = an acyl phosphate + holo-[ACP]. The protein operates within lipid metabolism; phospholipid metabolism. In terms of biological role, catalyzes the reversible formation of acyl-phosphate (acyl-PO(4)) from acyl-[acyl-carrier-protein] (acyl-ACP). This enzyme utilizes acyl-ACP as fatty acyl donor, but not acyl-CoA. In Shewanella woodyi (strain ATCC 51908 / MS32), this protein is Phosphate acyltransferase.